The following is a 237-amino-acid chain: Probable transcriptional regulatory protein Fjoh_2560 (237 aa).

Belongs to the TACO1 family.

Its subcellular location is the cytoplasm. This chain is Probable transcriptional regulatory protein Fjoh_2560, found in Flavobacterium johnsoniae (strain ATCC 17061 / DSM 2064 / JCM 8514 / BCRC 14874 / CCUG 350202 / NBRC 14942 / NCIMB 11054 / UW101) (Cytophaga johnsonae).